Here is a 200-residue protein sequence, read N- to C-terminus: Troponin I-like protein (200 aa).

Disordered regions lie at residues 1–20 and 181–200; these read MGDE…AEVR and ENKA…ENEE. Residues 2-116 adopt a coiled-coil conformation; it reads GDEEKRKMEE…EDAKYDLEYE (115 aa).

Belongs to the troponin I family. As to expression, expressed in salivary gland, gut, muscle and cuticle (at protein level).

Its function is as follows. Inhibits endothelial cell proliferation and angiogenesis in a vertebrate host. Probably required for efficient blood feeding on vertebrate hosts. The protein is Troponin I-like protein of Haemaphysalis longicornis (Bush tick).